The primary structure comprises 1312 residues: Rho GTPase-activating protein gacG (1312 aa).

6 disordered regions span residues 52 to 74 (VENN…KRSQ), 111 to 158 (SNNN…SSSD), 314 to 519 (ISSS…PRNF), 762 to 831 (NSIS…SSTG), 1185 to 1230 (NNNN…SSSV), and 1282 to 1312 (TGTS…IVEE). Composition is skewed to low complexity over residues 53-67 (ENNN…NSEN) and 111-146 (SNNN…YSPR). Residues 147–158 (NNNNNFTESSSD) are compositionally biased toward polar residues. 3 stretches are compositionally biased toward low complexity: residues 328 to 355 (TTAA…ANNS), 373 to 397 (HHSS…IGNS), and 414 to 436 (LNLT…NNGN). Residues 437–449 (EVIQSSSSTSSPR) show a composition bias toward polar residues. Over residues 479-507 (SSTNSLNNSTSSLKSSNNNILQQQQQQQQ) the composition is skewed to low complexity. Polar residues-rich tracts occupy residues 508 to 518 (HYDSAPTTPRN) and 763 to 776 (SIST…GNIA). Residues 792–816 (NNNNNNNNNNNNNNNNNNNNNNNNN) show a composition bias toward low complexity. A Rho-GAP domain is found at 1030-1212 (SKIDPITGFN…HHNSHHHRDN (183 aa)). Residues 1196–1210 (HHHHHHHHHNSHHHR) are compositionally biased toward basic residues. 2 stretches are compositionally biased toward low complexity: residues 1213–1222 (NNNNSNNNSS) and 1282–1305 (TGTS…RSPS).

The protein resides in the cytoplasm. Functionally, rho GTPase-activating protein involved in the signal transduction pathway. This is Rho GTPase-activating protein gacG (gacG) from Dictyostelium discoideum (Social amoeba).